The primary structure comprises 64 residues: Large ribosomal subunit protein bL35 (64 aa).

Belongs to the bacterial ribosomal protein bL35 family.

This is Large ribosomal subunit protein bL35 from Shewanella halifaxensis (strain HAW-EB4).